The primary structure comprises 296 residues: Lipoyl synthase (296 aa).

7 residues coordinate [4Fe-4S] cluster: cysteine 37, cysteine 42, cysteine 48, cysteine 63, cysteine 67, cysteine 70, and serine 276. One can recognise a Radical SAM core domain in the interval 49 to 265 (WSKKHTTVMI…ERVAKTKGFL (217 aa)).

It belongs to the radical SAM superfamily. Lipoyl synthase family. [4Fe-4S] cluster serves as cofactor.

Its subcellular location is the cytoplasm. The enzyme catalyses [[Fe-S] cluster scaffold protein carrying a second [4Fe-4S](2+) cluster] + N(6)-octanoyl-L-lysyl-[protein] + 2 oxidized [2Fe-2S]-[ferredoxin] + 2 S-adenosyl-L-methionine + 4 H(+) = [[Fe-S] cluster scaffold protein] + N(6)-[(R)-dihydrolipoyl]-L-lysyl-[protein] + 4 Fe(3+) + 2 hydrogen sulfide + 2 5'-deoxyadenosine + 2 L-methionine + 2 reduced [2Fe-2S]-[ferredoxin]. It functions in the pathway protein modification; protein lipoylation via endogenous pathway; protein N(6)-(lipoyl)lysine from octanoyl-[acyl-carrier-protein]: step 2/2. Functionally, catalyzes the radical-mediated insertion of two sulfur atoms into the C-6 and C-8 positions of the octanoyl moiety bound to the lipoyl domains of lipoate-dependent enzymes, thereby converting the octanoylated domains into lipoylated derivatives. The sequence is that of Lipoyl synthase from Rickettsia conorii (strain ATCC VR-613 / Malish 7).